The chain runs to 101 residues: Signal recognition particle 19 kDa protein (101 aa).

This sequence belongs to the SRP19 family. As to quaternary structure, part of the signal recognition particle protein translocation system, which is composed of SRP and FtsY. Archaeal SRP consists of a 7S RNA molecule of 300 nucleotides and two protein subunits: SRP54 and SRP19.

The protein localises to the cytoplasm. Functionally, involved in targeting and insertion of nascent membrane proteins into the cytoplasmic membrane. Binds directly to 7S RNA and mediates binding of the 54 kDa subunit of the SRP. The chain is Signal recognition particle 19 kDa protein from Methanosarcina acetivorans (strain ATCC 35395 / DSM 2834 / JCM 12185 / C2A).